The following is a 517-amino-acid chain: Cytochrome P450 monooxygenase stcB (517 aa).

Cysteine 461 lines the heme pocket.

This sequence belongs to the cytochrome P450 family. It depends on heme as a cofactor.

It functions in the pathway mycotoxin biosynthesis; sterigmatocystin biosynthesis. Its function is as follows. Cytochrome P450 monooxygenase; part of the gene cluster that mediates the biosynthesis of sterigmatocystin (ST), a polyketide-derived furanocoumarin which is part of the most toxic and carcinogenic compounds among the known mycotoxins. The first step in the biosynthesis of sterigmatocystin is the production of hexanoate by the fatty acid synthase (FAS) units stcJ and stcK. The polyketide backbone is assembled by the non-reducing polyketide synthase stcA by condensation of the starter hexanoyl-CoA and 7 malonyl-CoA extender units followed by cyclization and release of norsolorinic acid. Norsolorinic acid is the first stable intermediate in the biosynthesis of sterigmatocystin and is converted into averantin (AVN) by the ketoreductase stcE which reduces the hexanoate ketone to an alcohol. Averantin is then oxidized into 5'-hydroxyaverantin (HAVN) by the cytochrome P450 monooxygenase stcF. 5'-hydroxyaverantin is further converted to 5'-oxyaverantin (OAVN) by the 5'-hydroxyaverantin dehydrogenase stcG. The next step is the conversion of OAVN into averufin (AVF) which is catalyzed by a yet to be identified enzyme. The cytochrome P450 monooxygenase stcB and the flavin-binding monooxygenase stcW are both required for the conversion of averufin to 1-hydroxyversicolorone. The esterase stcI probably catalyzes the formation of versiconal hemiacetal acetate from 1-hydroxyversicolorone. The oxydoreductase stcN then probably catalyzes the biosynthetic step from versiconal to versicolorin B (VERB). The next step is performed by the versicolorin B desaturase stcL to produce versicolorin A (VERA). The ketoreductase stcU and the cytochrome P450 monooxygenase stcS are involved in the conversion of versicolorin A to demethylsterigmatocystin. The Baeyer-Villiger oxidas stcQ and the reductase stcR might be involved in the biosynthetic step from versicolorin A to demethylsterigmatocystin. The final step in the biosynthesis of sterigmatocystin is the methylation of demethylsterigmatocystin catalyzed by the methyltransferase stcP. This is Cytochrome P450 monooxygenase stcB from Emericella nidulans (strain FGSC A4 / ATCC 38163 / CBS 112.46 / NRRL 194 / M139) (Aspergillus nidulans).